Here is a 491-residue protein sequence, read N- to C-terminus: Protein nucleotidyltransferase YdiU (491 aa).

ATP-binding residues include G94, G96, R97, K117, D129, G130, R180, and R187. D256 (proton acceptor) is an active-site residue. N257 and D266 together coordinate Mg(2+). Position 266 (D266) interacts with ATP.

It belongs to the SELO family. It depends on Mg(2+) as a cofactor. Mn(2+) is required as a cofactor.

The catalysed reaction is L-seryl-[protein] + ATP = 3-O-(5'-adenylyl)-L-seryl-[protein] + diphosphate. The enzyme catalyses L-threonyl-[protein] + ATP = 3-O-(5'-adenylyl)-L-threonyl-[protein] + diphosphate. It carries out the reaction L-tyrosyl-[protein] + ATP = O-(5'-adenylyl)-L-tyrosyl-[protein] + diphosphate. It catalyses the reaction L-histidyl-[protein] + UTP = N(tele)-(5'-uridylyl)-L-histidyl-[protein] + diphosphate. The catalysed reaction is L-seryl-[protein] + UTP = O-(5'-uridylyl)-L-seryl-[protein] + diphosphate. The enzyme catalyses L-tyrosyl-[protein] + UTP = O-(5'-uridylyl)-L-tyrosyl-[protein] + diphosphate. Nucleotidyltransferase involved in the post-translational modification of proteins. It can catalyze the addition of adenosine monophosphate (AMP) or uridine monophosphate (UMP) to a protein, resulting in modifications known as AMPylation and UMPylation. The protein is Protein nucleotidyltransferase YdiU of Clostridium botulinum (strain Eklund 17B / Type B).